Here is a 538-residue protein sequence, read N- to C-terminus: Bifunctional purine biosynthesis protein PurH (538 aa).

The 148-residue stretch at 11-158 (PDLHRVRRAL…KNHAYTGVVT (148 aa)) folds into the MGS-like domain.

It belongs to the PurH family.

The enzyme catalyses (6R)-10-formyltetrahydrofolate + 5-amino-1-(5-phospho-beta-D-ribosyl)imidazole-4-carboxamide = 5-formamido-1-(5-phospho-D-ribosyl)imidazole-4-carboxamide + (6S)-5,6,7,8-tetrahydrofolate. The catalysed reaction is IMP + H2O = 5-formamido-1-(5-phospho-D-ribosyl)imidazole-4-carboxamide. Its pathway is purine metabolism; IMP biosynthesis via de novo pathway; 5-formamido-1-(5-phospho-D-ribosyl)imidazole-4-carboxamide from 5-amino-1-(5-phospho-D-ribosyl)imidazole-4-carboxamide (10-formyl THF route): step 1/1. The protein operates within purine metabolism; IMP biosynthesis via de novo pathway; IMP from 5-formamido-1-(5-phospho-D-ribosyl)imidazole-4-carboxamide: step 1/1. The sequence is that of Bifunctional purine biosynthesis protein PurH from Bartonella bacilliformis (strain ATCC 35685 / KC583 / Herrer 020/F12,63).